The following is a 233-amino-acid chain: Nickel import system ATP-binding protein NikE (233 aa).

An ABC transporter domain is found at 2-228; sequence IELKHVTFGY…DRHSYTKELV (227 aa). 35–42 contributes to the ATP binding site; sequence GESGCGKS.

The protein belongs to the ABC transporter superfamily. The complex is composed of two ATP-binding proteins (NikD and NikE), two transmembrane proteins (NikB and NikC) and a solute-binding protein (NikA).

It localises to the cell membrane. It carries out the reaction Ni(2+)(out) + ATP + H2O = Ni(2+)(in) + ADP + phosphate + H(+). Its function is as follows. Part of the ABC transporter complex NikABCDE (Opp2) involved in nickel import. Probably responsible for energy coupling to the transport system. The protein is Nickel import system ATP-binding protein NikE of Staphylococcus aureus (strain bovine RF122 / ET3-1).